Consider the following 569-residue polypeptide: Putative ABC transporter ATP-binding protein TTE1589 (569 aa).

ABC transporter domains lie at Ile-8–Met-248 and Ile-309–Lys-542. ATP-binding positions include Gly-43–Ser-50 and Gly-342–Thr-349.

The protein belongs to the ABC transporter superfamily.

It localises to the cell membrane. Probably part of an ABC transporter complex. Responsible for energy coupling to the transport system. The polypeptide is Putative ABC transporter ATP-binding protein TTE1589 (Caldanaerobacter subterraneus subsp. tengcongensis (strain DSM 15242 / JCM 11007 / NBRC 100824 / MB4) (Thermoanaerobacter tengcongensis)).